The following is a 519-amino-acid chain: Methionine--tRNA ligase (519 aa).

A 'HIGH' region motif is present at residues 11-21 (AYPNAAPHVGH). The short motif at 299-303 (KMSKS) is the 'KMSKS' region element. An ATP-binding site is contributed by K302. The tract at residues 500 to 519 (LPPPTGVFPRYQPPQPPEGK) is disordered.

It belongs to the class-I aminoacyl-tRNA synthetase family. MetG type 2B subfamily. As to quaternary structure, monomer.

The protein resides in the cytoplasm. It catalyses the reaction tRNA(Met) + L-methionine + ATP = L-methionyl-tRNA(Met) + AMP + diphosphate. Its function is as follows. Is required not only for elongation of protein synthesis but also for the initiation of all mRNA translation through initiator tRNA(fMet) aminoacylation. This chain is Methionine--tRNA ligase (metG), found in Mycobacterium tuberculosis (strain CDC 1551 / Oshkosh).